The sequence spans 294 residues: Glycine--tRNA ligase alpha subunit (294 aa).

This sequence belongs to the class-II aminoacyl-tRNA synthetase family. As to quaternary structure, tetramer of two alpha and two beta subunits.

It localises to the cytoplasm. It catalyses the reaction tRNA(Gly) + glycine + ATP = glycyl-tRNA(Gly) + AMP + diphosphate. The protein is Glycine--tRNA ligase alpha subunit of Nostoc sp. (strain PCC 7120 / SAG 25.82 / UTEX 2576).